We begin with the raw amino-acid sequence, 208 residues long: Protein GrpE (208 aa).

The span at 1–12 shows a compositional bias: basic and acidic residues; the sequence is MTNKDESVEKNT. The tract at residues 1 to 51 is disordered; the sequence is MTNKDESVEKNTESTVEETNVKQNIDDSVEQAEESKGHLQDEAIEETSDEN. Over residues 13 to 23 the composition is skewed to polar residues; the sequence is ESTVEETNVKQ. Residues 42-51 show a composition bias toward acidic residues; that stretch reads EAIEETSDEN.

This sequence belongs to the GrpE family. As to quaternary structure, homodimer.

It localises to the cytoplasm. Participates actively in the response to hyperosmotic and heat shock by preventing the aggregation of stress-denatured proteins, in association with DnaK and GrpE. It is the nucleotide exchange factor for DnaK and may function as a thermosensor. Unfolded proteins bind initially to DnaJ; upon interaction with the DnaJ-bound protein, DnaK hydrolyzes its bound ATP, resulting in the formation of a stable complex. GrpE releases ADP from DnaK; ATP binding to DnaK triggers the release of the substrate protein, thus completing the reaction cycle. Several rounds of ATP-dependent interactions between DnaJ, DnaK and GrpE are required for fully efficient folding. In Staphylococcus aureus (strain USA300), this protein is Protein GrpE.